We begin with the raw amino-acid sequence, 21 residues long: Mast cell protease 3 (21 aa).

The Peptidase S1 domain occupies 1–21 (IIGGVESRPHSRPYMATLEIT). Residues 1–21 (IIGGVESRPHSRPYMATLEIT) are disordered.

It belongs to the peptidase S1 family. Granzyme subfamily.

Functionally, thrombin inactivating protease. Displays chymotrypsin-like substrate specificity. This chain is Mast cell protease 3 (Mcpt3), found in Mus musculus (Mouse).